The following is a 142-amino-acid chain: Natriuretic peptides A (142 aa).

The first 23 residues, 1 to 23, serve as a signal peptide directing secretion; sequence MMLKTVIYTGVLFLICNKVLVRA. A propeptide spanning residues 24–112 is cleaved from the precursor; the sequence is DPLYSPYSSK…RLRDLLMAPR (89 aa). The tract at residues 47-123 is disordered; that stretch reads DTLGQDEGND…NRGSSGCFGS (77 aa). Positions 77–94 are enriched in basic and acidic residues; it reads WDRERERQWPASDYKKPQ. The cysteines at positions 120 and 136 are disulfide-linked.

Belongs to the natriuretic peptide family. Cleaved upon secretion to produce the functional hormone. Expressed in heart atrium and to a lower extent in heart ventricle, but not in brain.

The protein resides in the secreted. In terms of biological role, hormone playing a key role in cardiovascular homeostasis through regulation of natriuresis, diuresis, and vasodilation. Has a cGMP-stimulating activity. This Acipenser transmontanus (White sturgeon) protein is Natriuretic peptides A (nppa).